The sequence spans 889 residues: TATA box-binding protein-associated factor RNA polymerase I subunit B (889 aa).

An RRN7-type zinc finger spans residues 1–33 (MAPETNEKCKACGGFNFSMIDGFKYCDRCGTLL). Residues Cys-9, Cys-12, Cys-26, and Cys-29 each contribute to the Zn(2+) site. The tract at residues 35-101 (NFEELEAEEG…DFFSRQALKN (67 aa)) is B-reader. Positions 102-113 (DELAFPHESTPD) are B-linker. An N-terminal cyclin fold region spans residues 114 to 351 (YLYRLGLRLA…SAKEQETKEA (238 aa)). The tract at residues 229 to 253 (NLDLDSEEDEEEEENPNLNKSMENL) is disordered. Residues 230–243 (LDLDSEEDEEEEEN) are compositionally biased toward acidic residues. Residues 352-510 (MTKVDYAEPY…LLVFRLTFDI (159 aa)) are C-terminal cyclin fold.

Belongs to the RRN7/TAF1B family.

It localises to the nucleus. Its subcellular location is the nucleolus. Its function is as follows. Component of RNA polymerase I core factor complex that acts as a GTF2B/TFIIB-like factor and plays a key role in multiple steps during transcription initiation such as pre-initiation complex (PIC) assembly and postpolymerase recruitment events in polymerase I (Pol I) transcription. Binds rDNA promoters and plays a role in Pol I recruitment. The chain is TATA box-binding protein-associated factor RNA polymerase I subunit B from Caenorhabditis briggsae.